The primary structure comprises 458 residues: Cell death abnormality protein 8 (458 aa).

The Cytoplasmic portion of the chain corresponds to 1–45; it reads MFLKKHKSKLLLVPRDEEQEDAGIVAVLTDRIPSVLLVRWFDLFC. The chain crosses the membrane as a helical span at residues 46 to 66; the sequence is FGFAMCSYALDFFSDIGIAIF. Over 67-77 the chain is Extracellular; sequence HFWAGRYLSGS. A helical transmembrane segment spans residues 78–98; that stretch reads LVLAFALLPSVIINIISMVWM. Over 99-123 the chain is Cytoplasmic; sequence LDDEMHWKRRAHPRRTGTFELNQKR. A helical transmembrane segment spans residues 124–144; the sequence is FIPLSKMIVLCICQMGPLFWY. At 145–219 the chain is on the extracellular side; sequence YKALYYGWMF…YYQTGTYPYW (75 aa). The chain crosses the membrane as a helical span at residues 220–240; sequence LYFQAASLLLSIISISWSVVV. Over 241 to 274 the chain is Cytoplasmic; the sequence is QNRSLRMIRDDKVNIWPHEAVLQFCWRFLTILAR. Helical transmembrane passes span 275–295 and 296–316; these read IITL…LISV and HLLV…DACT. Residue H317 is a topological domain, extracellular. A helical membrane pass occupies residues 318-338; sequence IEKLLLLINTFIHIFIPFNMV. At 339 to 353 the chain is on the cytoplasmic side; sequence EGNTRWRYLTAYSVE. The helical transmembrane segment at 354–374 threads the bilayer; that stretch reads FIEMMLVCWLLPLSLNTFPYI. The Extracellular segment spans residues 375–378; it reads EKVQ. A helical membrane pass occupies residues 379–399; the sequence is VGVPISFIAGIAIMMMYYQFF. At 400-458 the chain is on the cytoplasmic side; the sequence is HPNRRQLIVTQSQEDLSLNVQKSVETLTPKLESSLEISGEQNTSQDLVSELLLDVEHEN.

It belongs to the XK family. Cleavage by ced-3 activates ced-8 function in promoting phosphatidylserine exposure at the surface of apoptotic cells.

It localises to the cell membrane. The catalysed reaction is a 1,2-diacyl-sn-glycero-3-phospho-L-serine(in) = a 1,2-diacyl-sn-glycero-3-phospho-L-serine(out). Phospholipid scramblase that acts downstream of ced-9 and caspase ced-3 to promote phosphatidylserine exposure on apoptotic cell surface. Phosphatidylserine is a specific marker only present at the surface of apoptotic cells and acts as a specific signal for engulfment. Regulates apoptosis kinetics during embryonic development. Not required for engulfment of germ cell corpses. The polypeptide is Cell death abnormality protein 8 (Caenorhabditis elegans).